We begin with the raw amino-acid sequence, 423 residues long: tRNA(Met) cytidine acetate ligase (423 aa).

ATP is bound by residues 7–20 (VVEY…HLYH), glycine 102, asparagine 165, and arginine 190.

Belongs to the TmcAL family.

The protein localises to the cytoplasm. It catalyses the reaction cytidine(34) in elongator tRNA(Met) + acetate + ATP = N(4)-acetylcytidine(34) in elongator tRNA(Met) + AMP + diphosphate. Functionally, catalyzes the formation of N(4)-acetylcytidine (ac(4)C) at the wobble position of elongator tRNA(Met), using acetate and ATP as substrates. First activates an acetate ion to form acetyladenylate (Ac-AMP) and then transfers the acetyl group to tRNA to form ac(4)C34. The sequence is that of tRNA(Met) cytidine acetate ligase from Thermosipho africanus (strain TCF52B).